Reading from the N-terminus, the 786-residue chain is Spermatogenesis-associated protein 20 (786 aa).

An N-terminal signal peptide occupies residues 1 to 22 (MLGARAWLGRVLLLPRAGAGLA). Positions 23 to 61 (ASRRGSSSRDKDRSATVSSSVPMPAGGKGSHPSSTPQRV) are disordered. At serine 649 the chain carries Phosphoserine.

It localises to the secreted. Its function is as follows. May play a role in fertility regulation. This chain is Spermatogenesis-associated protein 20 (SPATA20), found in Homo sapiens (Human).